Consider the following 486-residue polypeptide: Palmitoyltransferase pfa5 (486 aa).

Transmembrane regions (helical) follow at residues 12–32 (AVARVIPVVLFGIIIYSCYVI) and 54–74 (VGAGAAILVVFYILLLFVIIT). The interval 94-130 (AADQQSTPAKRSKSRSRRKGHGHGHRKSKSDEVSDKP) is disordered. Residues 103-121 (KRSKSRSRRKGHGHGHRKS) show a composition bias toward basic residues. One can recognise a DHHC domain in the interval 172-222 (IYCSKCCHYKPDRTHHCREVDRCVRKMDHFCPWVGGVVSETSFKFFIQFVF). A run of 2 helical transmembrane segments spans residues 217-237 (FIQFVFYTALFCMTVLIVCAI) and 261-281 (LVMLTLIGLSDSLQLAAFNLT). Disordered regions lie at residues 326 to 357 (PVPPPLSGMPTQPATGEGDNPYSPPPVPSTDP) and 433 to 486 (KDAA…TGTT). Over residues 447-456 (SSYNSSPSAP) the composition is skewed to low complexity. The span at 460–480 (RSKRKQKRGKHHHHHHHHRHS) shows a compositional bias: basic residues.

It belongs to the DHHC palmitoyltransferase family. PFA5 subfamily. Autopalmitoylated.

The protein resides in the membrane. It catalyses the reaction L-cysteinyl-[protein] + hexadecanoyl-CoA = S-hexadecanoyl-L-cysteinyl-[protein] + CoA. In Emericella nidulans (strain FGSC A4 / ATCC 38163 / CBS 112.46 / NRRL 194 / M139) (Aspergillus nidulans), this protein is Palmitoyltransferase pfa5 (pfa5).